The chain runs to 269 residues: Hydroxypyruvate/pyruvate aldolase (269 aa).

The Proton acceptor role is filled by histidine 47. Residues glutamate 151 and aspartate 177 each contribute to the a divalent metal cation site.

The protein belongs to the HpcH/HpaI aldolase family. A divalent metal cation is required as a cofactor.

The enzyme catalyses D-glyceraldehyde + 3-hydroxypyruvate = 2-dehydro-D-gluconate. It carries out the reaction D-glyceraldehyde + 3-hydroxypyruvate = (3R,4S,5R)-3,4,5,6-tetrahydroxy-2-oxohexanoate. The catalysed reaction is D-glyceraldehyde + 3-hydroxypyruvate = 2-dehydro-D-galactonate. It catalyses the reaction D-glyceraldehyde + pyruvate = 2-dehydro-3-deoxy-L-galactonate. The enzyme catalyses 2-dehydro-3-deoxy-D-gluconate = D-glyceraldehyde + pyruvate. Its function is as follows. Aldolase which can catalyze in vitro the aldolisation reaction between hydroxypyruvate (HPA) or pyruvate (PA) and D-glyceraldehyde (D-GA). The condensation of hydroxypyruvate and D-glyceraldehyde produces 2-dehydro-D-gluconate as the major product, (3R,4S,5R)-3,4,5,6-tetrahydroxy-2-oxohexanoate and 2-dehydro-D-galactonate. The condensation of pyruvate and D-glyceraldehyde produces 2-dehydro-3-deoxy-L-galactonate as the major product and 2-dehydro-3-deoxy-D-gluconate. The chain is Hydroxypyruvate/pyruvate aldolase from Cupriavidus necator (strain ATCC 17699 / DSM 428 / KCTC 22496 / NCIMB 10442 / H16 / Stanier 337) (Ralstonia eutropha).